A 340-amino-acid chain; its full sequence is Probable peroxidase 61 (340 aa).

A signal peptide spans 1-25 (MQFVNFFPLLALVVISLAGKATVEA). Disulfide bonds link C46-C122, C79-C84, C128-C331, and C205-C237. An N-linked (GlcNAc...) asparagine glycan is attached at N63. R73 is a catalytic residue. Residues D78, V81, G83, D85, and S87 each coordinate Ca(2+). P168 provides a ligand contact to substrate. Residue H198 coordinates heme b. S199 is a binding site for Ca(2+). N226 carries an N-linked (GlcNAc...) asparagine glycan. The Ca(2+) site is built by D255 and S258.

Belongs to the peroxidase family. Classical plant (class III) peroxidase subfamily. It depends on heme b as a cofactor. The cofactor is Ca(2+).

It localises to the secreted. The enzyme catalyses 2 a phenolic donor + H2O2 = 2 a phenolic radical donor + 2 H2O. In terms of biological role, removal of H(2)O(2), oxidation of toxic reductants, biosynthesis and degradation of lignin, suberization, auxin catabolism, response to environmental stresses such as wounding, pathogen attack and oxidative stress. The enzyme activity has to be proved. The protein is Probable peroxidase 61 (PER61) of Arabidopsis thaliana (Mouse-ear cress).